We begin with the raw amino-acid sequence, 522 residues long: N-acetylgalactosamine-6-sulfatase (522 aa).

The first 25 residues, 1 to 25 (MAPVAAATGWRLLLVLSAAGLGAAG), serve as a signal peptide directing secretion. A catalytic domain region spans residues 27–379 (PQPPNILLLL…PAMLGGQLTD (353 aa)). Residues Asp-38, Asp-39, and Cys-78 each coordinate Ca(2+). The Nucleophile role is filled by Cys-78. Cys-78 is subject to 3-oxoalanine (Cys). Residue His-141 is part of the active site. An N-linked (GlcNAc...) asparagine glycan is attached at Asn-203. Ca(2+) contacts are provided by Asp-288 and Asn-289. Cys-308 and Cys-419 are joined by a disulfide. N-linked (GlcNAc...) asparagine glycosylation is present at Asn-423. Disulfide bonds link Cys-489/Cys-518 and Cys-501/Cys-507.

It belongs to the sulfatase family. Homodimer. It depends on Ca(2+) as a cofactor. In terms of processing, the conversion to 3-oxoalanine (also known as C-formylglycine, FGly), of a serine or cysteine residue in prokaryotes and of a cysteine residue in eukaryotes, is critical for catalytic activity.

It is found in the lysosome. The enzyme catalyses Hydrolysis of the 6-sulfate groups of the N-acetyl-D-galactosamine 6-sulfate units of chondroitin sulfate and of the D-galactose 6-sulfate units of keratan sulfate.. This is N-acetylgalactosamine-6-sulfatase (GALNS) from Canis lupus familiaris (Dog).